The sequence spans 1565 residues: MLSWRLQTGPEKAELQELNARLYDYVCRVRELERENLLLEEELRGRRGREGLWAEGQARCAEEARSLRQQLDELSWATALAEGERDALRRELRELQRLDAEERAARGRLDAELGAQQRELQEALGARAALEALLGRLQAERRGLDAAHERDVRELRARAASLTMHFRARATGPAAPPPRLREVHDSYALLVAESWRETVQLYEDEVRELEEALRRGQESRLQAEEETRLCAQEAEALRREALGLEQLRARLEDALLRMREEYGIQAEERQRVIDCLEDEKATLTLAMADWLRDYQDLLQVKTGLSLEVATYRALLEGESNPEIVIWAEHVENMPSEFRNKSYHYTDSLLQRENERNLFSRQKAPLASFNHSSALYSNLSGHRGSQTGTSIGGDARRGFLGSGYSSSATTQQENSYGKAVSSQTNVRTFSPTYGLLRNTEAQVKTFPDRPKAGDTREVPVYIGEDSTIARESYRDRRDKVAAGASESTRSNERTVILGKKTEVKATREQERNRPETIRTKPEEKMFDSKEKASEERNLRWEELTKLDKEARQRESQQMKEKAKEKDSPKEKSVREREVPISLEVSQDRRAEVSPKGLQTPVKDAGGGTGREAEARELRFRLGTSDATGSLQGDSMTETVAENIVTSILKQFTQSPETEASADSFPDTKVTYVDRKELPGERKTKTEIVVESKLTEDVDVSDEAGLDYLLSKDIKEVGLKGKSAEQMIGDIINLGLKGREGRAKVVNVEIVEEPVSYVSGEKPEEFSVPFKVEEVEDVSPGPWGLVKEEEGYGESDVTFSVNQHRRTKQPQENTTHVEEVTEAGDSEGEQSYFVSTPDEHPGGHDRDDGSVYGQIHIEEESTIRYSWQDEIVQGTRRRTQKDGAVGEKVVKPLDVPAPSLEGDLGSTHWKEQARSGEFHAEPTVIEKEIKIPHEFHTSMKGISSKEPRQQLVEVIGQLEETLPERMREELSALTREGQGGPGSVSVDVKKVQGAGGSSVTLVAEVNVSQTVDADRLDLEELSKDEASEMEKAVESVVRESLSRQRSPAPGSPDEEGGAEAPAAGIRFRRWATRELYIPSGESEVAGGASHSSGQRTPQGPVSATVEVSSPTGFAQSQVLEDVSQAARHIKLGPSEVWRTERMSYEGPTAEVVEVSAGGDLSQAASPTGASRSVRHVTLGPGQSPLSREVIFLGPAPACPEAWGSPEPGPAESSADMDGSGRHSTFGCRQFHAEKEIIFQGPISAAGKVGDYFATEESVGTQTSVRQLQLGPKEGFSGQIQFTAPLSDKVELGVIGDSVHMEGLPGSSTSIRHISIGPQRHQTTQQIVYHGLVPQLGESGDSESTVHGEGSADVHQATHSHTSGRQTVMTEKSTFQSVVSESPQEDSAEDTSGAEMTSGVSRSFRHIRLGPTETETSEHIAIRGPVSRTFVLAGSADSPELGKLADSSRTLRHIAPGPKETSFTFQMDVSNVEAIRSRTQEAGALGVSDRGSWRDADSRNDQAVGVSFKASAGEGDQAHREQGKEQAMFDKKVQLQRMVDQRSVISDEKKVALLYLDNEEEENDGHWF.

The head stretch occupies residues 1 to 10 (MLSWRLQTGP). Residues 11–49 (EKAELQELNARLYDYVCRVRELERENLLLEEELRGRRGR) are coil 1A. Residues 11–320 (EKAELQELNA…YRALLEGESN (310 aa)) are interaction with DMD and UTRN. The IF rod domain occupies 11 to 322 (EKAELQELNA…ALLEGESNPE (312 aa)). Residues 50–58 (EGLWAEGQA) form a linker 1 region. A coil 1B region spans residues 59 to 163 (RCAEEARSLR…ELRARAASLT (105 aa)). Positions 164–186 (MHFRARATGPAAPPPRLREVHDS) are linker 12. The segment at 187–300 (YALLVAESWR…LRDYQDLLQV (114 aa)) is coil 2. Positions 301–1565 (KTGLSLEVAT…EEEENDGHWF (1265 aa)) are tail. Positions 401 to 421 (SGYSSSATTQQENSYGKAVSS) are disordered. Over residues 402-421 (GYSSSATTQQENSYGKAVSS) the composition is skewed to polar residues. Phosphoserine is present on Ser429. The interval 472–609 (YRDRRDKVAA…VKDAGGGTGR (138 aa)) is disordered. Over residues 498 to 577 (KKTEVKATRE…KEKSVREREV (80 aa)) the composition is skewed to basic and acidic residues. Phosphothreonine occurs at positions 598 and 651. 2 positions are modified to phosphoserine: Ser653 and Ser777. The span at 1019 to 1040 (LSKDEASEMEKAVESVVRESLS) shows a compositional bias: basic and acidic residues. Residues 1019-1060 (LSKDEASEMEKAVESVVRESLSRQRSPAPGSPDEEGGAEAPA) form a disordered region. Phosphoserine occurs at positions 1044, 1049, 1077, 1087, 1181, and 1184. The disordered stretch occupies residues 1080-1105 (SEVAGGASHSSGQRTPQGPVSATVEV). Residues 1087-1105 (SHSSGQRTPQGPVSATVEV) are compositionally biased toward polar residues. Positions 1152–1463 (VSAGGDLSQA…GPKETSFTFQ (312 aa)) are interaction with TLN1 and VCL. Disordered regions lie at residues 1198–1221 (EAWG…GRHS) and 1332–1415 (QLGE…ETSE). The tract at residues 1244–1563 (GKVGDYFATE…DNEEEENDGH (320 aa)) is interaction with DMD and UTRN. The segment covering 1354-1379 (ATHSHTSGRQTVMTEKSTFQSVVSES) has biased composition (polar residues). Ser1435 bears the Phosphoserine mark. Arg1487 bears the Omega-N-methylarginine mark. Positions 1505 to 1525 (FKASAGEGDQAHREQGKEQAM) are disordered. Residues 1513–1525 (DQAHREQGKEQAM) are compositionally biased toward basic and acidic residues.

This sequence belongs to the intermediate filament family. In terms of assembly, interacts with GFAP and VIM. Isoform 1 interacts with TLN1 and VCL. Isoform 2 interacts with DES and DTNA. Isoform 1 and isoform 2 interact with DMD and UTRN. As to expression, isoform 2 is strongly detected in adult heart, fetal skeletal muscles and fetal heart. Isoform 1 is weakly detected in fetal heart and also in fetal skeletal muscle. Isoform 1 and isoform 2 are detected in adult bladder (at protein level). The mRNA is predominantly expressed in heart and muscle with some expression in brain which may be due to tissue-specific isoforms.

It is found in the cytoplasm. The protein localises to the cytoskeleton. It localises to the cell junction. Its subcellular location is the adherens junction. Type-VI intermediate filament (IF) which plays an important cytoskeletal role within the muscle cell cytoskeleton. It forms heteromeric IFs with desmin and/or vimentin, and via its interaction with cytoskeletal proteins alpha-dystrobrevin, dystrophin, talin-1, utrophin and vinculin, is able to link these heteromeric IFs to adherens-type junctions, such as to the costameres, neuromuscular junctions, and myotendinous junctions within striated muscle cells. This is Synemin from Homo sapiens (Human).